Here is a 160-residue protein sequence, read N- to C-terminus: Cytochrome b6-f complex subunit 4 (160 aa).

The next 3 helical transmembrane spans lie at 36-56, 95-115, and 131-151; these read LLYM…SLAV, LIGI…PFIE, and AVFL…TLPI.

Belongs to the cytochrome b family. PetD subfamily. As to quaternary structure, the 4 large subunits of the cytochrome b6-f complex are cytochrome b6, subunit IV (17 kDa polypeptide, petD), cytochrome f and the Rieske protein, while the 4 small subunits are petG, petL, petM and petN. The complex functions as a dimer.

The protein resides in the plastid. Its subcellular location is the chloroplast thylakoid membrane. In terms of biological role, component of the cytochrome b6-f complex, which mediates electron transfer between photosystem II (PSII) and photosystem I (PSI), cyclic electron flow around PSI, and state transitions. The sequence is that of Cytochrome b6-f complex subunit 4 from Bigelowiella natans (Pedinomonas minutissima).